The chain runs to 370 residues: Glucan endo-1,3-beta-glucosidase (370 aa).

An N-terminal signal peptide occupies residues 1–32; that stretch reads MASFFARTRRFSLVSLFLLELFTINLIPTTDA. At Gln-33 the chain carries Pyrrolidone carboxylic acid. The active-site Proton donor is the Glu-127. Glu-272 functions as the Nucleophile in the catalytic mechanism. Residues 348–370 constitute a propeptide, removed in mature form; sequence GERRDGEIVEGDFNGTVSLKSDM. N-linked (GlcNAc...) asparagine glycosylation occurs at Asn-361.

It belongs to the glycosyl hydrolase 17 family. As to expression, constitutively expressed in seedling roots.

It catalyses the reaction Hydrolysis of (1-&gt;3)-beta-D-glucosidic linkages in (1-&gt;3)-beta-D-glucans.. In terms of biological role, implicated in the defense of plants against pathogens. This chain is Glucan endo-1,3-beta-glucosidase, found in Pisum sativum (Garden pea).